We begin with the raw amino-acid sequence, 288 residues long: Ribosomal RNA small subunit methyltransferase A (288 aa).

The S-adenosyl-L-methionine site is built by asparagine 28, leucine 30, glycine 55, glutamate 76, aspartate 101, and asparagine 130.

This sequence belongs to the class I-like SAM-binding methyltransferase superfamily. rRNA adenine N(6)-methyltransferase family. RsmA subfamily.

Its subcellular location is the cytoplasm. The enzyme catalyses adenosine(1518)/adenosine(1519) in 16S rRNA + 4 S-adenosyl-L-methionine = N(6)-dimethyladenosine(1518)/N(6)-dimethyladenosine(1519) in 16S rRNA + 4 S-adenosyl-L-homocysteine + 4 H(+). Functionally, specifically dimethylates two adjacent adenosines (A1518 and A1519) in the loop of a conserved hairpin near the 3'-end of 16S rRNA in the 30S particle. May play a critical role in biogenesis of 30S subunits. This is Ribosomal RNA small subunit methyltransferase A from Moorella thermoacetica (strain ATCC 39073 / JCM 9320).